The following is a 1579-amino-acid chain: MKVELSKVPILGKDVVHVGFDIADHIVDTIFQSCPSSTYVVINDTNVEKIPHYVDLCGELQAKLKSGSRILQYSVKPGEAHKTREQKAAIEDYLLSEGCTRDTVIIAVGGGVIGDMIGYVASTFMRGVRVVQVPTSLLAMVDSSIGGKTAVDTPLGKNFIGAFWQPQFVFVDIKWLETLPKREFINGIAEVIKTACIWNAEEFARLEENADLFLQVVNGSKTTQVSVQGQVHELSLTNIDAMLEHVYRLVLESIKVKTHVVSSDEREAGLRNLLNFGHTIGHAYEAILTPQALHGECVSIGMIKEAELSRYLNILSPTQVARLTKILAAYGLPISPDQKWFKDLTLNKKTPLDVLLKKMSIDKKNDGSKKKAVLLETIGKCYGTSAHVVSDEDIRFVLTDETLVYPFKTLENGQEKTIVPPGSKSISNRALILAALGEGTCKIKNLLHSDDTKHMLHAVQQLKGATITWEDNGETVVLKGHGGSTLQATAEPLYLGNAGTASRFLTSVAALVNSTSSQKSVVLTGNARMQERPIGPLVDSLRENGISIDYLNKEKSLPLKINTDSNFKGGRIELAATVSSQYVSSILMCAPYAEEPVTLALVGGKPISKLYIDMTIKMMEKFGIYVKASTEEPNTYHIPKGHYVNPPEYVIESDASSATYPLAYAAMTGTTVTVPNIGFESLQGDARFARDVLKPMGCSVTQTETSTTVTGPPVGGLKPLKHVDMEPMTDAFLTACVVAAVAHDGKEGSRNTTTIEGIANQRVKECNRILAMVDELAKFGVEANELPDGIQVHGLSSIDKLKVPEAIHSYDDHRVAMSFSLLAGMVGATKDALSEPVRILERSCTGKTWPGWWDVLHTQLGAKLDGSEPLQSAVKKNSNSSIVIIGMRAAGKTTVSSWCANALGFKFLDLDTVFEEQYKKGSVKEFVAEHGWDAFRATETKIFEESVKKYGEGYVLSTGGGIVEGAASRKSLKQFASQGGIVLHLHRDIDETIKFLNSDPTRPAYNEDIRNVWERREEWYKECANFTFYAPHCTSSTQFNQLRKTFETFIRTISGKREVKIPTNRSSFVCLTFDDLAAHKEKIPDITAGCSAVELRVDQLKSYDLDFVAKQLSILRLASSSLPIIFTIRTKSQGGQFPDDDKSTLGSLLSLALEVGVEFVDMELTLSSELQYSLVNNKRNTKIIGSHHDFDAKFDWNDSEWENRYNQALSLDVDVVKFVGTAKDFEDNLKLEQFRLQHTAKPLIAINMTDVGKMSRVLNTVLTPVTSSLLPSASAPGQLTLSQINEIYTLLGGFSAKNFYVVGSPISHSRSPVLHNTGYKILGLPHKFEKFETSSASEVKDKLLSKCKLGGLAVTIPLKLDIMEFMDELSESAKLIGAVNTVIPLGDGKFKGDNTDWLGIYNSFLANGVPENVRGNSGFVIGAGGTSRAAVYALHQLGCSDIHLVNRTVEKPHDLKKSFPSEYNLHVLEDSQQAEGISGSVALAVSCVPADKPLDDNLLARVRAVLAKAQGTSFKPTLLEAAYKPAVTPMMKTASDEFSWHIIPGSQMLVHQGVAQFQLWTGFRAPFNAIYSAVTEEQA.

The 3-dehydroquinate synthase stretch occupies residues 1–391 (MKVELSKVPI…YGTSAHVVSD (391 aa)). NAD(+)-binding positions include 44 to 46 (DTN), 79 to 82 (EAHK), 110 to 112 (GGV), and Asp115. Arg126 contacts 7-phospho-2-dehydro-3-deoxy-D-arabino-heptonate. NAD(+) is bound at residue 135–136 (TS). 7-phospho-2-dehydro-3-deoxy-D-arabino-heptonate contacts are provided by Asp142 and Lys148. An NAD(+)-binding site is contributed by Lys157. Asn158 serves as a coordination point for 7-phospho-2-dehydro-3-deoxy-D-arabino-heptonate. Residues 175–178 (WLET) and Asn186 each bind NAD(+). Glu190 provides a ligand contact to Zn(2+). 7-phospho-2-dehydro-3-deoxy-D-arabino-heptonate-binding positions include 190–193 (EVIK) and Lys257. Catalysis depends on Glu267, which acts as the Proton acceptor; for 3-dehydroquinate synthase activity. Residues 271–275 (RNLLN) and His278 contribute to the 7-phospho-2-dehydro-3-deoxy-D-arabino-heptonate site. A Zn(2+)-binding site is contributed by His278. The active-site Proton acceptor; for 3-dehydroquinate synthase activity is His282. 7-phospho-2-dehydro-3-deoxy-D-arabino-heptonate contacts are provided by His294 and Lys363. His294 is a Zn(2+) binding site. The interval 404-862 (VYPFKTLENG…WDVLHTQLGA (459 aa)) is EPSP synthase. Catalysis depends on Cys844, which acts as the For EPSP synthase activity. Positions 881 to 1070 (SIVIIGMRAA…IPTNRSSFVC (190 aa)) are shikimate kinase. Position 886-893 (886-893 (GMRAAGKT)) interacts with ATP. The 3-dehydroquinase stretch occupies residues 1071 to 1283 (LTFDDLAAHK…SAPGQLTLSQ (213 aa)). His1188 functions as the Proton acceptor; for 3-dehydroquinate dehydratase activity in the catalytic mechanism. The active-site Schiff-base intermediate with substrate; for 3-dehydroquinate dehydratase activity is Lys1217. The tract at residues 1296-1579 (AKNFYVVGSP…IYSAVTEEQA (284 aa)) is shikimate dehydrogenase.

This sequence in the N-terminal section; belongs to the sugar phosphate cyclases superfamily. Dehydroquinate synthase family. The protein in the 2nd section; belongs to the EPSP synthase family. In the 3rd section; belongs to the shikimate kinase family. It in the 4th section; belongs to the type-I 3-dehydroquinase family. This sequence in the C-terminal section; belongs to the shikimate dehydrogenase family. Homodimer. The cofactor is Zn(2+).

It is found in the cytoplasm. It carries out the reaction 7-phospho-2-dehydro-3-deoxy-D-arabino-heptonate = 3-dehydroquinate + phosphate. The catalysed reaction is 3-dehydroquinate = 3-dehydroshikimate + H2O. It catalyses the reaction shikimate + NADP(+) = 3-dehydroshikimate + NADPH + H(+). The enzyme catalyses shikimate + ATP = 3-phosphoshikimate + ADP + H(+). It carries out the reaction 3-phosphoshikimate + phosphoenolpyruvate = 5-O-(1-carboxyvinyl)-3-phosphoshikimate + phosphate. The protein operates within metabolic intermediate biosynthesis; chorismate biosynthesis; chorismate from D-erythrose 4-phosphate and phosphoenolpyruvate: step 2/7. It functions in the pathway metabolic intermediate biosynthesis; chorismate biosynthesis; chorismate from D-erythrose 4-phosphate and phosphoenolpyruvate: step 3/7. It participates in metabolic intermediate biosynthesis; chorismate biosynthesis; chorismate from D-erythrose 4-phosphate and phosphoenolpyruvate: step 4/7. Its pathway is metabolic intermediate biosynthesis; chorismate biosynthesis; chorismate from D-erythrose 4-phosphate and phosphoenolpyruvate: step 5/7. The protein operates within metabolic intermediate biosynthesis; chorismate biosynthesis; chorismate from D-erythrose 4-phosphate and phosphoenolpyruvate: step 6/7. Its function is as follows. The AROM polypeptide catalyzes 5 consecutive enzymatic reactions in prechorismate polyaromatic amino acid biosynthesis. This Lachancea thermotolerans (strain ATCC 56472 / CBS 6340 / NRRL Y-8284) (Yeast) protein is Pentafunctional AROM polypeptide.